Here is a 275-residue protein sequence, read N- to C-terminus: Melanoma-associated antigen B5 (275 aa).

The interval 1–33 is disordered; it reads MTSAGVFNAGSDERANSRDEEYPCSSEVSPSTE. The span at 11–21 shows a compositional bias: basic and acidic residues; the sequence is SDERANSRDEE. The segment covering 23–33 has biased composition (low complexity); it reads PCSSEVSPSTE. In terms of domain architecture, MAGE spans 40 to 239; that stretch reads INIKVGLLEQ…GAFSSQYEEA (200 aa).

In terms of tissue distribution, expressed in testis. Not expressed in other normal tissues, but is expressed in tumors of different histological origins.

The sequence is that of Melanoma-associated antigen B5 (MAGEB5) from Homo sapiens (Human).